The chain runs to 35 residues: Photosystem II reaction center protein T (35 aa).

A helical transmembrane segment spans residues 3–23; that stretch reads ALVYTFLLVSTLGIIFFAIFF.

The protein belongs to the PsbT family. In terms of assembly, PSII is composed of 1 copy each of membrane proteins PsbA, PsbB, PsbC, PsbD, PsbE, PsbF, PsbH, PsbI, PsbJ, PsbK, PsbL, PsbM, PsbT, PsbY, PsbZ, Psb30/Ycf12, at least 3 peripheral proteins of the oxygen-evolving complex and a large number of cofactors. It forms dimeric complexes.

The protein localises to the plastid. It localises to the chloroplast thylakoid membrane. In terms of biological role, found at the monomer-monomer interface of the photosystem II (PS II) dimer, plays a role in assembly and dimerization of PSII. PSII is a light-driven water plastoquinone oxidoreductase, using light energy to abstract electrons from H(2)O, generating a proton gradient subsequently used for ATP formation. In Taxus brevifolia (Pacific yew), this protein is Photosystem II reaction center protein T.